A 338-amino-acid chain; its full sequence is RNA 3'-terminal phosphate cyclase (338 aa).

Residues Gln-103 and 283 to 287 (YLADQ) contribute to the ATP site. His-308 serves as the catalytic Tele-AMP-histidine intermediate.

It belongs to the RNA 3'-terminal cyclase family. Type 1 subfamily.

Its subcellular location is the cytoplasm. The enzyme catalyses a 3'-end 3'-phospho-ribonucleotide-RNA + ATP = a 3'-end 2',3'-cyclophospho-ribonucleotide-RNA + AMP + diphosphate. Its function is as follows. Catalyzes the conversion of 3'-phosphate to a 2',3'-cyclic phosphodiester at the end of RNA. The mechanism of action of the enzyme occurs in 3 steps: (A) adenylation of the enzyme by ATP; (B) transfer of adenylate to an RNA-N3'P to produce RNA-N3'PP5'A; (C) and attack of the adjacent 2'-hydroxyl on the 3'-phosphorus in the diester linkage to produce the cyclic end product. The biological role of this enzyme is unknown but it is likely to function in some aspects of cellular RNA processing. The protein is RNA 3'-terminal phosphate cyclase of Escherichia coli (strain SMS-3-5 / SECEC).